The primary structure comprises 197 residues: dITP/XTP pyrophosphatase (197 aa).

9 to 14 is a substrate binding site; sequence TNNLNK. Residues Glu-42 and Asp-71 each contribute to the Mg(2+) site. Catalysis depends on Asp-71, which acts as the Proton acceptor. Residues Ser-72, 153–156, Lys-176, and 181–182 contribute to the substrate site; these read FGYD and HR.

Belongs to the HAM1 NTPase family. In terms of assembly, homodimer. Mg(2+) is required as a cofactor.

The catalysed reaction is XTP + H2O = XMP + diphosphate + H(+). The enzyme catalyses dITP + H2O = dIMP + diphosphate + H(+). It catalyses the reaction ITP + H2O = IMP + diphosphate + H(+). Pyrophosphatase that catalyzes the hydrolysis of nucleoside triphosphates to their monophosphate derivatives, with a high preference for the non-canonical purine nucleotides XTP (xanthosine triphosphate), dITP (deoxyinosine triphosphate) and ITP. Seems to function as a house-cleaning enzyme that removes non-canonical purine nucleotides from the nucleotide pool, thus preventing their incorporation into DNA/RNA and avoiding chromosomal lesions. This Leptospira interrogans serogroup Icterohaemorrhagiae serovar copenhageni (strain Fiocruz L1-130) protein is dITP/XTP pyrophosphatase.